A 579-amino-acid chain; its full sequence is uncharacterized protein (579 aa).

This is an uncharacterized protein from Klebsiella pneumoniae.